The sequence spans 319 residues: MKRQCMNRVALIGTGFVGASYAFALMNQGIADELVLIDVNKEKAEGDVMDLNHGKVFAPKPMNIWHGDYQDCQDADLVVICAGANQKPGETRLDLVDKNMNIFKTIVDSVMRSGFDGIFLVATNPVDILTYATWKFSGLPKERVIGSGTILDTARFRFLLSEYFQVAPTNVHAYIIGEHGDTELPVWSHAEIGSVPIEQILSQNDRYRKEDLENIFVNVRDAAYQVIEKKGATYYGIAMGLVRITRAILHNENAILTVSAYLDGQYNEQNVYIGVPAIINRNGIREVMELKLNETEQQQFHHSATVLKDILSRYFDDVK.

NAD(+)-binding positions include Val-17, Asp-38, Lys-43, Tyr-69, and 83–84 (GA). The substrate site is built by Gln-86 and Arg-92. Residues Thr-105, 122–124 (ATN), and Ser-147 contribute to the NAD(+) site. Residue 124–127 (NPVD) coordinates substrate. Position 152–155 (152–155 (DTAR)) interacts with substrate. Beta-D-fructose 1,6-bisphosphate is bound by residues Arg-157 and His-172. Residue His-179 is the Proton acceptor of the active site. The residue at position 224 (Tyr-224) is a Phosphotyrosine. Position 233 (Thr-233) interacts with substrate.

This sequence belongs to the LDH/MDH superfamily. LDH family. Homotetramer.

The protein localises to the cytoplasm. The catalysed reaction is (S)-lactate + NAD(+) = pyruvate + NADH + H(+). It participates in fermentation; pyruvate fermentation to lactate; (S)-lactate from pyruvate: step 1/1. With respect to regulation, allosterically activated by fructose 1,6-bisphosphate (FBP). Catalyzes the conversion of lactate to pyruvate. The chain is L-lactate dehydrogenase from Geobacillus sp. (strain WCH70).